Here is a 287-residue protein sequence, read N- to C-terminus: Lycopene elongase/hydratase (287 aa).

7 helical membrane passes run I15–I35, W37–I57, T87–G107, F137–I157, M166–V186, L218–I238, and V265–H285.

Belongs to the UbiA prenyltransferase family.

The protein localises to the cell membrane. The catalysed reaction is all-trans-lycopene + dimethylallyl diphosphate + A + H2O = nonaflavuxanthin + AH2 + diphosphate. The enzyme catalyses nonaflavuxanthin + dimethylallyl diphosphate + A + H2O = flavuxanthin + AH2 + diphosphate. It participates in carotenoid biosynthesis. Its function is as follows. Catalyzes the elongation of the C(40) carotenoid all-trans-lycopene to the acyclic C(50) carotenoid flavuxanthin during decaprenoxanthin biosynthesis. Acts as a bifunctional enzyme that catalyzes the elongation of lycopene by attaching a C(5) isoprene unit at C-2, as well as the hydroxylation of the new isoprene unit. The enzyme acts at both ends of the substrate, forming the C(50) carotenoid flavuxanthin via the C(45) intermediate nonaflavuxanthin. In Corynebacterium glutamicum (strain ATCC 13032 / DSM 20300 / JCM 1318 / BCRC 11384 / CCUG 27702 / LMG 3730 / NBRC 12168 / NCIMB 10025 / NRRL B-2784 / 534), this protein is Lycopene elongase/hydratase.